Here is a 365-residue protein sequence, read N- to C-terminus: MQKPTRPQPKAGVLDIAAYVPGKEHVEGVAKVYKLSSNETPLGPSPHAREAYRHAGEKLELYPDGQALALRQAIAETQGLNISNILCGNGSDELLGLLCQTYLAPGDETIITEHGFAVYKIQTLAAGATPVTVKEKNERIDVDAILAGVTARTKIVFIANPANPTGTYLPFEEVRRLHAGLPQHVLLVLDAAYAEYVRRNDYEAGLELVSSNENVVMTRTFSKIHGLPGLRIGWIYAPLHIIDAMNRIRGPFNMNSAAIAAGAAAIRDRAHVEKSVAYNEKWLAWLTEEFTRLGLRVTPSVTNFLLIHFPDDAAHSADKADEWLSRRGYILRRVGGYGFPNALRMTVGPEEANRGVVAALTEFLK.

K223 carries the post-translational modification N6-(pyridoxal phosphate)lysine.

It belongs to the class-II pyridoxal-phosphate-dependent aminotransferase family. Histidinol-phosphate aminotransferase subfamily. In terms of assembly, homodimer. Requires pyridoxal 5'-phosphate as cofactor.

The enzyme catalyses L-histidinol phosphate + 2-oxoglutarate = 3-(imidazol-4-yl)-2-oxopropyl phosphate + L-glutamate. It participates in amino-acid biosynthesis; L-histidine biosynthesis; L-histidine from 5-phospho-alpha-D-ribose 1-diphosphate: step 7/9. This Brucella abortus (strain 2308) protein is Histidinol-phosphate aminotransferase.